Reading from the N-terminus, the 285-residue chain is ATP phosphoribosyltransferase (285 aa).

The protein belongs to the ATP phosphoribosyltransferase family. Long subfamily. It depends on Mg(2+) as a cofactor.

The protein resides in the cytoplasm. The catalysed reaction is 1-(5-phospho-beta-D-ribosyl)-ATP + diphosphate = 5-phospho-alpha-D-ribose 1-diphosphate + ATP. It participates in amino-acid biosynthesis; L-histidine biosynthesis; L-histidine from 5-phospho-alpha-D-ribose 1-diphosphate: step 1/9. With respect to regulation, feedback inhibited by histidine. Catalyzes the condensation of ATP and 5-phosphoribose 1-diphosphate to form N'-(5'-phosphoribosyl)-ATP (PR-ATP). Has a crucial role in the pathway because the rate of histidine biosynthesis seems to be controlled primarily by regulation of HisG enzymatic activity. This chain is ATP phosphoribosyltransferase, found in Methanocella arvoryzae (strain DSM 22066 / NBRC 105507 / MRE50).